We begin with the raw amino-acid sequence, 230 residues long: UPF0173 metal-dependent hydrolase Mbar_A3716 (230 aa).

Belongs to the UPF0173 family.

The protein is UPF0173 metal-dependent hydrolase Mbar_A3716 of Methanosarcina barkeri (strain Fusaro / DSM 804).